The primary structure comprises 281 residues: Octanoyl-[GcvH]:protein N-octanoyltransferase (281 aa).

In terms of domain architecture, BPL/LPL catalytic spans 44–250; sequence GESAATMRSW…TLQQFAPKLT (207 aa). Cysteine 149 (acyl-thioester intermediate) is an active-site residue.

Belongs to the octanoyltransferase LipL family.

It catalyses the reaction N(6)-octanoyl-L-lysyl-[glycine-cleavage complex H protein] + L-lysyl-[lipoyl-carrier protein] = N(6)-octanoyl-L-lysyl-[lipoyl-carrier protein] + L-lysyl-[glycine-cleavage complex H protein]. It participates in protein modification; protein lipoylation via endogenous pathway; protein N(6)-(lipoyl)lysine from octanoyl-[acyl-carrier-protein]. In terms of biological role, catalyzes the amidotransfer (transamidation) of the octanoyl moiety from octanoyl-GcvH to the lipoyl domain of the E2 subunit of lipoate-dependent enzymes. This Bacillus anthracis protein is Octanoyl-[GcvH]:protein N-octanoyltransferase.